The chain runs to 173 residues: Transcription factor S-II-related protein (173 aa).

One can recognise a TFIIS central domain in the interval 9–129 (ISDKEREIVI…EETLNQMATV (121 aa)). The TFIIS-type zinc-finger motif lies at 130-170 (EWKPCYACKNTSYHFYQLQTRSADEPMTTFYICKNCMKTYK). Zn(2+)-binding residues include C134, C137, C162, and C165.

Belongs to the TFS-II family.

The chain is Transcription factor S-II-related protein from Acanthamoeba polyphaga mimivirus (APMV).